A 178-amino-acid chain; its full sequence is Large ribosomal subunit protein uL6 (178 aa).

The protein belongs to the universal ribosomal protein uL6 family. Part of the 50S ribosomal subunit.

Its function is as follows. This protein binds to the 23S rRNA, and is important in its secondary structure. It is located near the subunit interface in the base of the L7/L12 stalk, and near the tRNA binding site of the peptidyltransferase center. This is Large ribosomal subunit protein uL6 from Helicobacter acinonychis (strain Sheeba).